A 273-amino-acid polypeptide reads, in one-letter code: Dermonecrotic toxin LdSicTox-alphaIB3ai (273 aa).

Histidine 5 is a catalytic residue. Mg(2+) is bound by residues glutamate 25 and aspartate 27. Residue histidine 41 is the Nucleophile of the active site. Cystine bridges form between cysteine 45–cysteine 51 and cysteine 47–cysteine 190. Aspartate 85 contributes to the Mg(2+) binding site.

This sequence belongs to the arthropod phospholipase D family. Class II subfamily. It depends on Mg(2+) as a cofactor. Expressed by the venom gland.

The protein localises to the secreted. The enzyme catalyses an N-(acyl)-sphingosylphosphocholine = an N-(acyl)-sphingosyl-1,3-cyclic phosphate + choline. It catalyses the reaction an N-(acyl)-sphingosylphosphoethanolamine = an N-(acyl)-sphingosyl-1,3-cyclic phosphate + ethanolamine. It carries out the reaction a 1-acyl-sn-glycero-3-phosphocholine = a 1-acyl-sn-glycero-2,3-cyclic phosphate + choline. The catalysed reaction is a 1-acyl-sn-glycero-3-phosphoethanolamine = a 1-acyl-sn-glycero-2,3-cyclic phosphate + ethanolamine. Its function is as follows. Dermonecrotic toxins cleave the phosphodiester linkage between the phosphate and headgroup of certain phospholipids (sphingolipid and lysolipid substrates), forming an alcohol (often choline) and a cyclic phosphate. This toxin acts on sphingomyelin (SM). It may also act on ceramide phosphoethanolamine (CPE), lysophosphatidylcholine (LPC) and lysophosphatidylethanolamine (LPE), but not on lysophosphatidylserine (LPS), and lysophosphatidylglycerol (LPG). It acts by transphosphatidylation, releasing exclusively cyclic phosphate products as second products. Induces dermonecrosis, hemolysis, increased vascular permeability, edema, inflammatory response, and platelet aggregation. The protein is Dermonecrotic toxin LdSicTox-alphaIB3ai of Loxosceles deserta (Desert recluse spider).